The following is a 282-amino-acid chain: MNGLLRIRQRYQGLAQSDKKLADYLLLQPDTARHLSSQQLANEAGVSQSSVVKFAQKLGYKGFPALKLALSEALASQPESPSVPIHNQIRGDDPLRLVGEKLIKENTAAMYATLNVNSEEKLHECVTMLRSARRIILTGIGASGLVAQNFAWKLMKIGFNAAAVRDMHALLATVQASSPDDLLLAISYTGVRRELNLAADEMLRVGGKVLAITGFTPNALQQRASHCLYTIAEEQATNSASISACHAQGMLTDLLFIALIQQDLELAPERIRHSEALVKKLV.

One can recognise an HTH rpiR-type domain in the interval 1-77 (MNGLLRIRQR…LALSEALASQ (77 aa)). A DNA-binding region (H-T-H motif) is located at residues 37–56 (SQQLANEAGVSQSSVVKFAQ). An SIS domain is found at 125 to 265 (CVTMLRSARR…FIALIQQDLE (141 aa)).

This is an uncharacterized protein from Escherichia coli (strain K12).